We begin with the raw amino-acid sequence, 99 residues long: Integration host factor subunit alpha (99 aa).

Belongs to the bacterial histone-like protein family. As to quaternary structure, heterodimer of an alpha and a beta chain.

This protein is one of the two subunits of integration host factor, a specific DNA-binding protein that functions in genetic recombination as well as in transcriptional and translational control. In Xylella fastidiosa (strain M12), this protein is Integration host factor subunit alpha.